We begin with the raw amino-acid sequence, 357 residues long: MEENKQRVKSIINILQLVAPGTPLREGIDNVLRAQTGGLIVLGYNEQIKSIVDGGFHINCAFSPASLYELAKMDGALILNETGSKILIANAQLVPDSSIDSIETGMRHRTAERVAKQTGSLVVAISQRRNVITLYQGNLRYTLKDIGVILTKANQAIQTLEKYKAVWNDGITNLGILEFEEVVTMSEVVHVLHSVEMVLRIKNEILSYIHELGTEGRLIRLQLTELLADLEAEAALLIKDYHQEKTQDHHQILKKLQDLANTQLLEDSDLVKLLGYPGQTSLEESVTPRGYRITSKISRVPPLIIENLINRFKTLQGVCRATINELDDVEGIGEVRAKKIREGLKRIQEHLYMSRHN.

The region spanning 8–146 (VKSIINILQL…GNLRYTLKDI (139 aa)) is the DAC domain. ATP contacts are provided by residues Gly-75, Leu-93, and 106–110 (MRHRT).

It belongs to the DisA family. Homooctamer. Mg(2+) serves as cofactor.

The enzyme catalyses 2 ATP = 3',3'-c-di-AMP + 2 diphosphate. Participates in a DNA-damage check-point that is active prior to asymmetric division when DNA is damaged. DisA forms globular foci that rapidly scan along the chromosomes during sporulation, searching for lesions. When a lesion is present, DisA pauses at the lesion site. This triggers a cellular response that culminates in a temporary block in sporulation initiation. Its function is as follows. Also has diadenylate cyclase activity, catalyzing the condensation of 2 ATP molecules into cyclic di-AMP (c-di-AMP). c-di-AMP acts as a signaling molecule that couples DNA integrity with progression of sporulation. The rise in c-di-AMP level generated by DisA while scanning the chromosome, operates as a positive signal that advances sporulation; upon encountering a lesion, the DisA focus arrests at the damaged site and halts c-di-AMP synthesis. This Bacillus cereus (strain B4264) protein is DNA integrity scanning protein DisA.